The sequence spans 177 residues: Probable DNA-directed RNA polymerase subunit delta (177 aa).

Residues 14 to 83 (LSMIEVARAI…GENKWGLRSW (70 aa)) enclose the HTH HARE-type domain. Composition is skewed to acidic residues over residues 117–134 (GDDD…DEDN) and 142–157 (EYDD…EVES). Residues 117–164 (GDDDAIDYGHDDPEDEDNYPGSVSSEYDDENPDDEKDEVESYDQKSTK) form a disordered region.

The protein belongs to the RpoE family. In terms of assembly, RNAP is composed of a core of 2 alpha, a beta and a beta' subunits. The core is associated with a delta subunit and one of several sigma factors.

Functionally, participates in both the initiation and recycling phases of transcription. In the presence of the delta subunit, RNAP displays an increased specificity of transcription, a decreased affinity for nucleic acids, and an increased efficiency of RNA synthesis because of enhanced recycling. This is Probable DNA-directed RNA polymerase subunit delta from Streptococcus suis (strain 98HAH33).